The following is a 153-amino-acid chain: UPF0756 membrane protein LSL_0936 (153 aa).

5 consecutive transmembrane segments (helical) span residues 4–24 (WIFL…SLLI), 26–46 (GAVV…YPVI), 51–71 (INWG…TGQI), 86–106 (WIAV…VNLL), and 116–136 (LVIG…GPVI).

Belongs to the UPF0756 family.

The protein resides in the cell membrane. This is UPF0756 membrane protein LSL_0936 from Ligilactobacillus salivarius (strain UCC118) (Lactobacillus salivarius).